Here is an 838-residue protein sequence, read N- to C-terminus: MVQLDVEKTIEELTLGEKVALTAGIDFWHTAAVPRLNIPSLRLSDGPNGVRGTRFFNGVPAACFPCATALGATWDTKLLHEVGRLMGEESIAKGTHVVLGPTINIQRSPLGGRGFESFAEDGVLSGILAGHYCKGLQETGVAATLKHFVCNDQEHERLAVDSIVTMRAMREIYLLPFQLAMRICKTACVMTAYNKINGTHVSENKQIITDILRKEWGWDGLVMSDWFGTYSTSDAINAGLDLEMPGPTRWRGTALAHAVSSNKAFEFVVDERVRNILNLHNFVEPLGIPENAPEKALNRPEDQALLRRAAAESVVLMKNQDNILPLKKEKPILVIGPNAKTAAYCGGGSASLDAYYTVTPFEGVSAQSQGEVKFSQGVYSYKELPLLGPLLKTDDGKKGFKFRVYNEPPSEPNRQLIDELHLESSSGFLMDYKHPKIKTFTFYVDMEGYFTPEEDGIYDFGVTVVGTGKLFVDDELVVDNSKNQRQGTAMFGNATVEEKGSKELKAGQTYKVVLQFGTAPTSDLDMRGVVIFGPGGFRFGAARRVSQEELISKAAELASQASQVVIFAGLTSEWETEGHDRDHMDLPPGSDEMISRVLDANPNAVVVIQSGTPVTMPWAHKAKALLQAWFGGNECGNGIADVLYGAVNPAAKLPLSFPVRLQDNPSYLNFRSERGRVLYGEDVYVGYRYYEKVDLAPLFPFGHGLSYTTFSRSDLSLATTPEKPQLEDGEPITATVSVTNTGSVAGAEIVQLWVAPPPTGVNRPVRELKGFAKVFLQPGETKKVEIVVEKKLATSWWDEQREKWASEKGTYEVLVTGTGDEVLKTSFEVGKTRYWLGL.

Asparagine 197 carries an N-linked (GlcNAc...) asparagine glycan. Aspartate 225 is a catalytic residue. The region spanning 395-555 is the PA14 domain; the sequence is DGKKGFKFRV…SQEELISKAA (161 aa). A glycan (N-linked (GlcNAc...) asparagine) is linked at asparagine 493.

This sequence belongs to the glycosyl hydrolase 3 family.

It is found in the secreted. It catalyses the reaction Hydrolysis of terminal, non-reducing beta-D-glucosyl residues with release of beta-D-glucose.. The protein operates within glycan metabolism; cellulose degradation. In terms of biological role, beta-glucosidases are one of a number of cellulolytic enzymes involved in the degradation of cellulosic biomass. Catalyzes the last step releasing glucose from the inhibitory cellobiose. In Neosartorya fischeri (strain ATCC 1020 / DSM 3700 / CBS 544.65 / FGSC A1164 / JCM 1740 / NRRL 181 / WB 181) (Aspergillus fischerianus), this protein is Probable beta-glucosidase I (bglI).